Reading from the N-terminus, the 318-residue chain is MFLMNILCLVIPILLAMAFLTLVERKILGYMQLRKGPNIVGPYGLLQPIADAIKLFIKEPLRPLTSSKLMFTLAPTLAFTLALSLWIPMPMPHSLINLNLGVLFILALSSLAVYSILWSGWASNSKYALIGALRAVAQTISYEVTLAIILLSVMMMNGSFTLSTLTTTQEHMWLILPLWPLAMMWFISTLAETNRAPFDLTEGESELVSGFNVEYAAGPFALFFMAEYTNIIMMNALTATLFLGAFHNPLFPELFTVNFITKTLILTAIFLWVRASYPRFRYDQLMHLLWKSFLPLTLALCMLHVSIPALSAGVPPHM.

9 consecutive transmembrane segments (helical) span residues 2 to 22, 37 to 57, 69 to 89, 100 to 120, 136 to 156, 171 to 191, 231 to 251, 253 to 273, and 293 to 313; these read FLMNILCLVIPILLAMAFLTL, PNIVGPYGLLQPIADAIKLFI, LMFTLAPTLAFTLALSLWIPM, LGVLFILALSSLAVYSILWSG, VAQTISYEVTLAIILLSVMMM, HMWLILPLWPLAMMWFISTLA, IIMMNALTATLFLGAFHNPLF, ELFTVNFITKTLILTAIFLWV, and FLPLTLALCMLHVSIPALSAG.

The protein belongs to the complex I subunit 1 family. In terms of assembly, core subunit of respiratory chain NADH dehydrogenase (Complex I) which is composed of 45 different subunits.

Its subcellular location is the mitochondrion inner membrane. It carries out the reaction a ubiquinone + NADH + 5 H(+)(in) = a ubiquinol + NAD(+) + 4 H(+)(out). Functionally, core subunit of the mitochondrial membrane respiratory chain NADH dehydrogenase (Complex I) which catalyzes electron transfer from NADH through the respiratory chain, using ubiquinone as an electron acceptor. Essential for the catalytic activity and assembly of complex I. This chain is NADH-ubiquinone oxidoreductase chain 1 (MT-ND1), found in Zaedyus pichiy (Pichi).